We begin with the raw amino-acid sequence, 143 residues long: Large-conductance mechanosensitive channel (143 aa).

Transmembrane regions (helical) follow at residues 16–36 and 84–104; these read VIDL…VTAL and INTV…VKLI.

This sequence belongs to the MscL family. As to quaternary structure, homopentamer.

It localises to the cell inner membrane. Functionally, channel that opens in response to stretch forces in the membrane lipid bilayer. May participate in the regulation of osmotic pressure changes within the cell. In Xanthomonas campestris pv. campestris (strain 8004), this protein is Large-conductance mechanosensitive channel.